Here is a 482-residue protein sequence, read N- to C-terminus: Auxin transporter-like protein 4 (482 aa).

Topologically, residues 1 to 59 (MLSQNQAEEAIVTNMNETEQEGGSSLEEIAEDQSMFNFKSFLWHGGSVWDAWFSCASNQ) are cytoplasmic. The helical transmembrane segment at 60 to 77 (VAQVLLTLPYSFSQLGMV) threads the bilayer. Topologically, residues 78-79 (SG) are extracellular. Residues 80 to 100 (IVFQIFYGLIGSWTAYLISVL) form a helical membrane-spanning segment. Residues 101–135 (YVEYRARKEKENVNFKNHVIQWFEVLDGLLGRYWK) are Cytoplasmic-facing. Residues 136-156 (ALGLAFNCTFLLFGSVIQLIA) traverse the membrane as a helical segment. The Extracellular segment spans residues 157-172 (CASNIYYINDKLDKRT). Residues 173–193 (WTYIFGACCATTVFIPSFHNY) traverse the membrane as a helical segment. Residues 194-196 (RIW) are Cytoplasmic-facing. Residues 197–217 (SFLGLGMTTYTAWYMAIAAIV) traverse the membrane as a helical segment. Residues 218–232 (NGQIENVVHSGPTKL) lie on the Extracellular side of the membrane. A helical transmembrane segment spans residues 233–253 (VLYFTGATNILYTFGGHAVTV). Topologically, residues 254–266 (EIMHAMWKPQKFK) are cytoplasmic. A helical membrane pass occupies residues 267 to 287 (YIYFLATLYVFTLTIPSAVAV). Topologically, residues 288-314 (YWAFGDELLNHSNAFSLLPKNGFRDAA) are extracellular. Residue Asn-297 is glycosylated (N-linked (GlcNAc...) asparagine). Residues 315-335 (VILMLIHQFITFGFACTPLYF) form a helical membrane-spanning segment. The Cytoplasmic portion of the chain corresponds to 336–356 (VWEKVIGMHDTKSICLRALVR). A helical transmembrane segment spans residues 357–377 (LPVVIPIWFLAIIFPFFGPIN). Residue Ser-378 is a topological domain, extracellular. The helical transmembrane segment at 379-399 (AVGALLVTFTVYIIPALAHML) threads the bilayer. The Cytoplasmic segment spans residues 400-422 (TYRTASARKNAVEKPPSFLPSWT). A helical membrane pass occupies residues 423–443 (AVYVLNAFIVVWVLVVGFGFG). The Extracellular segment spans residues 444–482 (GWASMTNFIRQIDTFGLFAKCYQCKPPTPPQAPSPHARH).

The protein belongs to the amino acid/polyamine transporter 2 family. Amino acid/auxin permease (AAAP) (TC 2.A.18.1) subfamily. Shoots and roots of nodulating plants, at low levels.

It localises to the cell membrane. Functionally, carrier protein involved in proton-driven auxin influx. Mediates the formation of auxin gradient from developing leaves (site of auxin biosynthesis) to tips by contributing to the loading of auxin in vascular tissues and facilitating acropetal (base to tip) auxin transport within inner tissues of the root apex, and basipetal (tip to base) auxin transport within outer tissues of the root apex. May be involved in lateral roots and nodules formation. The sequence is that of Auxin transporter-like protein 4 (LAX4) from Medicago truncatula (Barrel medic).